The following is a 548-amino-acid chain: Chaperonin GroEL 1 (548 aa).

ATP contacts are provided by residues 30-33, K51, 87-91, G415, 479-481, and D495; these read TLGP, DGTTT, and NAA.

It belongs to the chaperonin (HSP60) family. In terms of assembly, forms a cylinder of 14 subunits composed of two heptameric rings stacked back-to-back. Interacts with the co-chaperonin GroES.

The protein localises to the cytoplasm. It carries out the reaction ATP + H2O + a folded polypeptide = ADP + phosphate + an unfolded polypeptide.. Functionally, together with its co-chaperonin GroES, plays an essential role in assisting protein folding. The GroEL-GroES system forms a nano-cage that allows encapsulation of the non-native substrate proteins and provides a physical environment optimized to promote and accelerate protein folding. The protein is Chaperonin GroEL 1 of Escherichia coli O1:K1 / APEC.